We begin with the raw amino-acid sequence, 209 residues long: Imidazole glycerol phosphate synthase subunit HisH (209 aa).

The Glutamine amidotransferase type-1 domain occupies Met-1 to Ser-205. Residue Cys-79 is the Nucleophile of the active site. Active-site residues include His-180 and Glu-182.

As to quaternary structure, heterodimer of HisH and HisF.

It localises to the cytoplasm. It catalyses the reaction 5-[(5-phospho-1-deoxy-D-ribulos-1-ylimino)methylamino]-1-(5-phospho-beta-D-ribosyl)imidazole-4-carboxamide + L-glutamine = D-erythro-1-(imidazol-4-yl)glycerol 3-phosphate + 5-amino-1-(5-phospho-beta-D-ribosyl)imidazole-4-carboxamide + L-glutamate + H(+). The catalysed reaction is L-glutamine + H2O = L-glutamate + NH4(+). Its pathway is amino-acid biosynthesis; L-histidine biosynthesis; L-histidine from 5-phospho-alpha-D-ribose 1-diphosphate: step 5/9. Functionally, IGPS catalyzes the conversion of PRFAR and glutamine to IGP, AICAR and glutamate. The HisH subunit catalyzes the hydrolysis of glutamine to glutamate and ammonia as part of the synthesis of IGP and AICAR. The resulting ammonia molecule is channeled to the active site of HisF. The protein is Imidazole glycerol phosphate synthase subunit HisH of Bacillus cereus (strain B4264).